The sequence spans 505 residues: Calcium/calmodulin-dependent protein kinase kinase 1 (505 aa).

The segment at 26–61 (THLEEADGGPEPTRNGVDPPPRARAASVIPGSTSRL) is disordered. Phosphoserine occurs at positions 67 and 74. Asymmetric dimethylarginine is present on R78. S100 carries the phosphoserine modification. The residue at position 108 (T108) is a Phosphothreonine. The Protein kinase domain occupies 128–409 (YKLQSEIGKG…VPDIKLHPWV (282 aa)). ATP is bound by residues 134–142 (IGKGAYGVV) and K157. The RP domain stretch occupies residues 167–189 (QYGFPRRPPPRGSQAAQGGPAKQ). Residue D275 is the Proton acceptor of the active site. The autoinhibitory domain stretch occupies residues 435–440 (KNSVRL). The interval 438 to 463 (VRLIPSWTTVILVKSMLRKRSFGNPF) is calmodulin-binding. Phosphoserine occurs at positions 458, 475, and 492. A disordered region spans residues 460–505 (GNPFEPQARREERSMSAPGNLLVKEGFGEGGKSPELPGVQEDEAAS).

This sequence belongs to the protein kinase superfamily. Ser/Thr protein kinase family. In terms of assembly, interacts with CAMK4 and calmodulin. Appears to be autophosphorylated in a Ca(2+)/calmodulin-dependent manner. Phosphorylated at multiple sites by PRCAKA/PKA. Phosphorylation of Ser-458 is blocked upon binding to Ca(2+)/calmodulin. In vitro, phosphorylated by CAMK1 and CAMK4.

The protein resides in the cytoplasm. It is found in the nucleus. It catalyses the reaction L-seryl-[protein] + ATP = O-phospho-L-seryl-[protein] + ADP + H(+). It carries out the reaction L-threonyl-[protein] + ATP = O-phospho-L-threonyl-[protein] + ADP + H(+). Its activity is regulated as follows. Activated by Ca(2+)/calmodulin. Binding of calmodulin may relieve intrasteric autoinhibition. Partially inhibited upon phosphorylation by PRCAKA/PKA. May be regulated through phosphorylation by CAMK1 and CAMK4. Calcium/calmodulin-dependent protein kinase that belongs to a proposed calcium-triggered signaling cascade involved in a number of cellular processes. Phosphorylates CAMK1, CAMK1D, CAMK1G and CAMK4. Involved in regulating cell apoptosis. Promotes cell survival by phosphorylating AKT1/PKB that inhibits pro-apoptotic BAD/Bcl2-antagonist of cell death. In Homo sapiens (Human), this protein is Calcium/calmodulin-dependent protein kinase kinase 1 (CAMKK1).